The chain runs to 506 residues: 2,3-bisphosphoglycerate-independent phosphoglycerate mutase (506 aa).

The Mn(2+) site is built by D12 and S63. S63 acts as the Phosphoserine intermediate in catalysis. Substrate contacts are provided by residues H122, 151–152 (RD), R182, R188, 253–256 (RADR), and K323. The Mn(2+) site is built by D390, H394, D432, H433, and H451.

The protein belongs to the BPG-independent phosphoglycerate mutase family. Monomer. Mn(2+) serves as cofactor.

It carries out the reaction (2R)-2-phosphoglycerate = (2R)-3-phosphoglycerate. Its pathway is carbohydrate degradation; glycolysis; pyruvate from D-glyceraldehyde 3-phosphate: step 3/5. Catalyzes the interconversion of 2-phosphoglycerate and 3-phosphoglycerate. This is 2,3-bisphosphoglycerate-independent phosphoglycerate mutase from Wolbachia pipientis wMel.